Here is a 241-residue protein sequence, read N- to C-terminus: 3-oxoacyl-[acyl-carrier-protein] reductase FabG (241 aa).

NADP(+) is bound by residues 13–16 (GASG), Ser38, 57–58 (EV), and Asn83. A substrate-binding site is contributed by Ser135. The active-site Proton acceptor is the Tyr148. Residues 148 to 152 (YCASK) and Ile181 each bind NADP(+).

The protein belongs to the short-chain dehydrogenases/reductases (SDR) family. Homotetramer.

The catalysed reaction is a (3R)-hydroxyacyl-[ACP] + NADP(+) = a 3-oxoacyl-[ACP] + NADPH + H(+). It functions in the pathway lipid metabolism; fatty acid biosynthesis. In terms of biological role, catalyzes the NADPH-dependent reduction of beta-ketoacyl-ACP substrates to beta-hydroxyacyl-ACP products, the first reductive step in the elongation cycle of fatty acid biosynthesis. The chain is 3-oxoacyl-[acyl-carrier-protein] reductase FabG (fabG) from Rickettsia conorii (strain ATCC VR-613 / Malish 7).